A 194-amino-acid polypeptide reads, in one-letter code: Leucyl/phenylalanyl-tRNA--protein transferase (194 aa).

The protein belongs to the L/F-transferase family.

It is found in the cytoplasm. It catalyses the reaction N-terminal L-lysyl-[protein] + L-leucyl-tRNA(Leu) = N-terminal L-leucyl-L-lysyl-[protein] + tRNA(Leu) + H(+). It carries out the reaction N-terminal L-arginyl-[protein] + L-leucyl-tRNA(Leu) = N-terminal L-leucyl-L-arginyl-[protein] + tRNA(Leu) + H(+). The catalysed reaction is L-phenylalanyl-tRNA(Phe) + an N-terminal L-alpha-aminoacyl-[protein] = an N-terminal L-phenylalanyl-L-alpha-aminoacyl-[protein] + tRNA(Phe). Functions in the N-end rule pathway of protein degradation where it conjugates Leu, Phe and, less efficiently, Met from aminoacyl-tRNAs to the N-termini of proteins containing an N-terminal arginine or lysine. The protein is Leucyl/phenylalanyl-tRNA--protein transferase of Chlorobium limicola (strain DSM 245 / NBRC 103803 / 6330).